Consider the following 455-residue polypeptide: UDP-glycosyltransferase 75B2 (455 aa).

Histidine 16 acts as the Proton acceptor in catalysis. Histidine 16 provides a ligand contact to an anthocyanidin. Residues glutamine 337, histidine 352, tryptophan 355, serine 357, glutamate 360, aspartate 376, and glutamine 377 each coordinate UDP-alpha-D-glucose.

The protein belongs to the UDP-glycosyltransferase family.

It carries out the reaction (indol-3-yl)acetate + UDP-alpha-D-glucose = 1-O-(indol-3-ylacetyl)-beta-D-glucose + UDP. The protein operates within plant hormone metabolism; auxin conjugation. Its function is as follows. Possesses low catalytic activity in vitro. Also active as glucosyltransferase in vitro on benzoates and benzoate derivatives. The polypeptide is UDP-glycosyltransferase 75B2 (UGT75B2) (Arabidopsis thaliana (Mouse-ear cress)).